The following is a 493-amino-acid chain: Cobyric acid synthase (493 aa).

Residues 246 to 440 enclose the GATase cobBQ-type domain; that stretch reads PIDIAVIKMP…IHGVFDGIVF (195 aa). The active-site Nucleophile is cysteine 326. Histidine 432 is an active-site residue.

The protein belongs to the CobB/CobQ family. CobQ subfamily.

It participates in cofactor biosynthesis; adenosylcobalamin biosynthesis. Functionally, catalyzes amidations at positions B, D, E, and G on adenosylcobyrinic A,C-diamide. NH(2) groups are provided by glutamine, and one molecule of ATP is hydrogenolyzed for each amidation. The sequence is that of Cobyric acid synthase from Clostridium botulinum (strain 657 / Type Ba4).